Consider the following 271-residue polypeptide: Ribosomal RNA small subunit methyltransferase A (271 aa).

S-adenosyl-L-methionine is bound by residues asparagine 19, leucine 21, glycine 46, glutamate 67, aspartate 92, and asparagine 113.

It belongs to the class I-like SAM-binding methyltransferase superfamily. rRNA adenine N(6)-methyltransferase family. RsmA subfamily.

Its subcellular location is the cytoplasm. The enzyme catalyses adenosine(1518)/adenosine(1519) in 16S rRNA + 4 S-adenosyl-L-methionine = N(6)-dimethyladenosine(1518)/N(6)-dimethyladenosine(1519) in 16S rRNA + 4 S-adenosyl-L-homocysteine + 4 H(+). Its function is as follows. Specifically dimethylates two adjacent adenosines (A1518 and A1519) in the loop of a conserved hairpin near the 3'-end of 16S rRNA in the 30S particle. May play a critical role in biogenesis of 30S subunits. The protein is Ribosomal RNA small subunit methyltransferase A of Photobacterium profundum (strain SS9).